We begin with the raw amino-acid sequence, 100 residues long: Cytochrome c2 iso-1 (100 aa).

Heme c is bound by residues Cys-11, Cys-14, His-15, and Met-76.

It belongs to the cytochrome c family. Post-translationally, binds 1 heme c group covalently per subunit.

Its function is as follows. Cytochrome c2 is found mainly in purple, non-sulfur, photosynthetic bacteria where it functions as the electron donor to the oxidized bacteriochlorophyll in the photophosphorylation pathway. However, it may also have a role in the respiratory chain and is found in some non-photosynthetic bacteria. In Magnetospirillum molischianum (Rhodospirillum molischianum), this protein is Cytochrome c2 iso-1.